We begin with the raw amino-acid sequence, 279 residues long: Pantothenate synthetase (279 aa).

Position 26–33 (26–33) interacts with ATP; it reads MGNLHEGH. Residue histidine 33 is the Proton donor of the active site. Glutamine 57 contributes to the (R)-pantoate binding site. Glutamine 57 contributes to the beta-alanine binding site. An ATP-binding site is contributed by 144 to 147; the sequence is GKKD. Glutamine 150 serves as a coordination point for (R)-pantoate. ATP contacts are provided by residues valine 173 and 181–184; that span reads LSSR.

It belongs to the pantothenate synthetase family. Homodimer.

The protein resides in the cytoplasm. The catalysed reaction is (R)-pantoate + beta-alanine + ATP = (R)-pantothenate + AMP + diphosphate + H(+). Its pathway is cofactor biosynthesis; (R)-pantothenate biosynthesis; (R)-pantothenate from (R)-pantoate and beta-alanine: step 1/1. Catalyzes the condensation of pantoate with beta-alanine in an ATP-dependent reaction via a pantoyl-adenylate intermediate. This chain is Pantothenate synthetase, found in Burkholderia orbicola (strain MC0-3).